The chain runs to 161 residues: 2-C-methyl-D-erythritol 2,4-cyclodiphosphate synthase (161 aa).

Residues D10 and H12 each coordinate a divalent metal cation. 4-CDP-2-C-methyl-D-erythritol 2-phosphate is bound by residues 10 to 12 (DVH) and 36 to 37 (HS). H44 contributes to the a divalent metal cation binding site. 4-CDP-2-C-methyl-D-erythritol 2-phosphate contacts are provided by residues 58–60 (DIG), 63–67 (FPDTD), 134–137 (TTTE), F141, and R144.

It belongs to the IspF family. As to quaternary structure, homotrimer. A divalent metal cation is required as a cofactor.

The enzyme catalyses 4-CDP-2-C-methyl-D-erythritol 2-phosphate = 2-C-methyl-D-erythritol 2,4-cyclic diphosphate + CMP. It functions in the pathway isoprenoid biosynthesis; isopentenyl diphosphate biosynthesis via DXP pathway; isopentenyl diphosphate from 1-deoxy-D-xylulose 5-phosphate: step 4/6. Its function is as follows. Involved in the biosynthesis of isopentenyl diphosphate (IPP) and dimethylallyl diphosphate (DMAPP), two major building blocks of isoprenoid compounds. Catalyzes the conversion of 4-diphosphocytidyl-2-C-methyl-D-erythritol 2-phosphate (CDP-ME2P) to 2-C-methyl-D-erythritol 2,4-cyclodiphosphate (ME-CPP) with a corresponding release of cytidine 5-monophosphate (CMP). This chain is 2-C-methyl-D-erythritol 2,4-cyclodiphosphate synthase, found in Shewanella putrefaciens (strain CN-32 / ATCC BAA-453).